Here is a 346-residue protein sequence, read N- to C-terminus: tRNA N6-adenosine threonylcarbamoyltransferase (346 aa).

Positions 111 and 115 each coordinate Fe cation. Residues 134–138, Asp-167, Gly-180, and Asn-279 each bind substrate; that span reads LVSGG. Position 307 (Asp-307) interacts with Fe cation.

The protein belongs to the KAE1 / TsaD family. The cofactor is Fe(2+).

The protein resides in the cytoplasm. The catalysed reaction is L-threonylcarbamoyladenylate + adenosine(37) in tRNA = N(6)-L-threonylcarbamoyladenosine(37) in tRNA + AMP + H(+). In terms of biological role, required for the formation of a threonylcarbamoyl group on adenosine at position 37 (t(6)A37) in tRNAs that read codons beginning with adenine. Is involved in the transfer of the threonylcarbamoyl moiety of threonylcarbamoyl-AMP (TC-AMP) to the N6 group of A37, together with TsaE and TsaB. TsaD likely plays a direct catalytic role in this reaction. In Burkholderia ambifaria (strain ATCC BAA-244 / DSM 16087 / CCUG 44356 / LMG 19182 / AMMD) (Burkholderia cepacia (strain AMMD)), this protein is tRNA N6-adenosine threonylcarbamoyltransferase.